The following is a 527-amino-acid chain: Amine oxidase [flavin-containing] A (527 aa).

M1 is subject to N-acetylmethionine. The Cytoplasmic segment spans residues M1–S497. The residue at position 383 (S383) is a Phosphoserine. At C406 the chain carries S-8alpha-FAD cysteine. The chain crosses the membrane as a helical; Anchor for type IV membrane protein span at residues V498–A518. Topologically, residues Y519–S527 are mitochondrial intermembrane. The segment at K520–R522 is interaction with membrane phospholipid headgroups.

Belongs to the flavin monoamine oxidase family. In terms of assembly, monomer, homo- or heterodimer (containing two subunits of similar size). Each subunit contains a covalently bound flavin. Enzymatically active as monomer. FAD is required as a cofactor.

The protein resides in the mitochondrion outer membrane. The catalysed reaction is a secondary aliphatic amine + O2 + H2O = a primary amine + an aldehyde + H2O2. The enzyme catalyses a primary methyl amine + O2 + H2O = an aldehyde + H2O2 + NH4(+). It catalyses the reaction (R)-adrenaline + O2 + H2O = (R)-3,4-dihydroxymandelaldehyde + methylamine + H2O2. It carries out the reaction dopamine + O2 + H2O = 3,4-dihydroxyphenylacetaldehyde + H2O2 + NH4(+). The catalysed reaction is tyramine + O2 + H2O = (4-hydroxyphenyl)acetaldehyde + H2O2 + NH4(+). The enzyme catalyses (R)-noradrenaline + O2 + H2O = (R)-3,4-dihydroxymandelaldehyde + H2O2 + NH4(+). It catalyses the reaction serotonin + O2 + H2O = (5-hydroxyindol-3-yl)acetaldehyde + H2O2 + NH4(+). It carries out the reaction kynuramine + O2 + H2O = 3-(2-aminophenyl)-3-oxopropanal + H2O2 + NH4(+). The catalysed reaction is tryptamine + O2 + H2O = indole-3-acetaldehyde + H2O2 + NH4(+). The enzyme catalyses 2-phenylethylamine + O2 + H2O = 2-phenylacetaldehyde + H2O2 + NH4(+). Its function is as follows. Catalyzes the oxidative deamination of primary and some secondary amine such as neurotransmitters, with concomitant reduction of oxygen to hydrogen peroxide and has important functions in the metabolism of neuroactive and vasoactive amines in the central nervous system and peripheral tissues. Preferentially oxidizes serotonin. Also catalyzes the oxidative deamination of kynuramine to 3-(2-aminophenyl)-3-oxopropanal that can spontaneously condense to 4-hydroxyquinoline. The polypeptide is Amine oxidase [flavin-containing] A (Canis lupus familiaris (Dog)).